Consider the following 265-residue polypeptide: MDTAQKQRWAITLSYDGSRFYGWQKQAGGVPTVQAALETALARIAGESVATTVAGRTDTGVHATAQVVHFDTAAVRPAQAWIRGVNAHLPEGIAVLHARQVAPGFHARFDASGRHYRYLLESAPVRSPLLKNRAGWTHLELDIGPMRRAAALLVGEQDFSSFRAAGCQAKSPVKTIYRADLTQSAGLVRLDLHGNAFLHHMVRNIMGALVYVGSGRLSVEGFAALIQERSRLKAPPTFMPDGLYLTGVDYPGAYGIVRPQIPEWL.

The Nucleophile role is filled by D58. A substrate-binding site is contributed by Y116.

This sequence belongs to the tRNA pseudouridine synthase TruA family. As to quaternary structure, homodimer.

The enzyme catalyses uridine(38/39/40) in tRNA = pseudouridine(38/39/40) in tRNA. Its function is as follows. Formation of pseudouridine at positions 38, 39 and 40 in the anticodon stem and loop of transfer RNAs. In Neisseria gonorrhoeae (strain ATCC 700825 / FA 1090), this protein is tRNA pseudouridine synthase A.